Consider the following 390-residue polypeptide: Mannitol-1-phosphate 5-dehydrogenase (390 aa).

7-18 (AVHFGGGNIGRG) provides a ligand contact to NAD(+). Residue K216 is part of the active site.

It belongs to the mannitol dehydrogenase family. Monomer.

The catalysed reaction is D-mannitol 1-phosphate + NAD(+) = beta-D-fructose 6-phosphate + NADH + H(+). Catalyzes the NAD(H)-dependent interconversion of D-fructose 6-phosphate and D-mannitol 1-phosphate in the mannitol metabolic pathway. Has a strong preference for NADH over NADPH. The sequence is that of Mannitol-1-phosphate 5-dehydrogenase from Alternaria alternata (Alternaria rot fungus).